Here is a 146-residue protein sequence, read N- to C-terminus: Large-conductance mechanosensitive channel (146 aa).

2 consecutive transmembrane segments (helical) span residues 14 to 34 (VLDL…VNSL) and 81 to 101 (GLFL…FLLV).

Belongs to the MscL family. In terms of assembly, homopentamer.

It is found in the cell membrane. Functionally, channel that opens in response to stretch forces in the membrane lipid bilayer. May participate in the regulation of osmotic pressure changes within the cell. The chain is Large-conductance mechanosensitive channel from Symbiobacterium thermophilum (strain DSM 24528 / JCM 14929 / IAM 14863 / T).